Reading from the N-terminus, the 59-residue chain is Large ribosomal subunit protein uL30 (59 aa).

It belongs to the universal ribosomal protein uL30 family. Part of the 50S ribosomal subunit.

This is Large ribosomal subunit protein uL30 from Escherichia coli (strain UTI89 / UPEC).